The chain runs to 917 residues: Nitrate reductase [NADH] 1 (917 aa).

Residues 62–81 form a disordered region; it reads DSYDDSSSDDEDESHNRNVP. Over residues 63-74 the composition is skewed to acidic residues; that stretch reads SYDDSSSDDEDE. C197 contacts Mo-molybdopterin. The Cytochrome b5 heme-binding domain maps to 545–620; it reads SKMYSISEVR…LEDYRIGELI (76 aa). Positions 580 and 603 each coordinate heme. Residues 660–772 form the FAD-binding FR-type domain; the sequence is REKIPVRLIE…KGPLGHIEYK (113 aa). FAD-binding positions include 712–715, 729–733, F734, F741, 746–748, and T799; these read RAYT, VVKVY, and LMS.

The protein belongs to the nitrate reductase family. Homodimer. The cofactor is FAD. It depends on heme as a cofactor. Mo-molybdopterin serves as cofactor. As to expression, root, leaf, and shoot.

The enzyme catalyses nitrite + NAD(+) + H2O = nitrate + NADH + H(+). Functionally, nitrate reductase is a key enzyme involved in the first step of nitrate assimilation in plants, fungi and bacteria. In Arabidopsis thaliana (Mouse-ear cress), this protein is Nitrate reductase [NADH] 1 (NIA1).